The following is a 199-amino-acid chain: MIQISDRAKAHFLRLIQREGVPGMGVRLSAVDPGTARADARLEFAEPSELVGDEWLIDCGDFTLYVASASVAWLDSAEIDYVTQATGSQQLIIKAPKIKGQELSQVASLVERVCWVVENEINPQLASHGGRVEVQEVSAEGVVLLRFGGGCHGCGMVDVTLKQGVEKTLMERVHGVIAVRDATDHSTGAAPYISRNFAS.

[4Fe-4S] cluster contacts are provided by cysteine 151 and cysteine 154.

It belongs to the NfuA family. Homodimer. [4Fe-4S] cluster is required as a cofactor.

In terms of biological role, involved in iron-sulfur cluster biogenesis. Binds a 4Fe-4S cluster, can transfer this cluster to apoproteins, and thereby intervenes in the maturation of Fe/S proteins. Could also act as a scaffold/chaperone for damaged Fe/S proteins. The chain is Fe/S biogenesis protein NfuA from Xylella fastidiosa (strain 9a5c).